The primary structure comprises 328 residues: Pyruvate dehydrogenase E1 component subunit beta (328 aa).

Glu60 is a thiamine diphosphate binding site. K(+) contacts are provided by Ile113, Ile162, and Asn166.

As to quaternary structure, heterodimer of an alpha and a beta chain. It depends on thiamine diphosphate as a cofactor.

It is found in the plastid. Its subcellular location is the chloroplast. It catalyses the reaction N(6)-[(R)-lipoyl]-L-lysyl-[protein] + pyruvate + H(+) = N(6)-[(R)-S(8)-acetyldihydrolipoyl]-L-lysyl-[protein] + CO2. Functionally, the pyruvate dehydrogenase complex catalyzes the overall conversion of pyruvate to acetyl-CoA and CO(2). It contains multiple copies of three enzymatic components: pyruvate dehydrogenase (E1), dihydrolipoamide acetyltransferase (E2) and lipoamide dehydrogenase (E3). The chain is Pyruvate dehydrogenase E1 component subunit beta (pdhB) from Staurastrum punctulatum (Green alga).